Reading from the N-terminus, the 985-residue chain is MAIWEQLEVSKAHVAYACVGVFSSIFSLVSLYVKEKLYIGESTVAGIFGLIVGPVCLNWFNPLKWGNSDSITLEITRIVLCLQIFAVAVELPRKYMLKHWVSVTMLLLPVMTAGWLIIGLFVWILIPGLNFSASLLISACITATDPILAQSVVSGKFAQRVPGHLRNLLSAESGCNDGMAFPFLFLSMNLILHPGNGREIVKDWICVTILYECLFGCLLGCFIGYVGRITIRFAEKKNIIDRESFLAFYVVLAFMCAGFGSILGVDDLLVSFAAGATFAWDGWFSQKTQESNVSTVIDLLLNYAYFIYFGAIIPWSQFNNGEIGTNVWRLIILSIVVIFLRRIPAVMILRPLIPDIKSWREALFVGHFGPIGVGAIFAAILARGELESTFSDEPTPLNVVPSKEESKHWQLIACIWPITCFFIVTSIIVHGSSVAIITLGRHLNTITLTKTFTTHTTNGDNGKSSWMQRLPSLDKAGRSFSLHRMDTQMTLSGDEGEAEEGGGRKGLAGGEDEEGLNNDQIGSVATSGIPARPAGGMPRRRKLSRKEKRLNRRQKLRNKGREIFSSRSKNEMYDDDELNDLGRERLQKEKEARAATFALSTAVNTQRNEEIGMGGDEEEDEYTPEKEYSDNYNNTPSFESSERSSSLRGRTYVPRNRYDGEETESEIESEDEMENESERSMASSEERRIRKMKEEEMKPGTAYLDGNRMIIENKQGEILNQVDIEDRNEARDDEVSVDSTAHSSLTTTMTNLSSSSGGRLKRILTPTSLGKIHSLVDKGKDKNKNSKYHAFKIDNLLIIENEDGDVIKRYKINPHKSDDDKSKNRPRNDSVVSRALTAVGLKSKANSGVPPPVDEEKAIEGPSRKGPGMLKKRTLTPAPPRGVQDSLDLEDEPSSEEDLGDSYNMDDSEDYDDNAYESETEFERQRRLNALGEMTAPADQDDEELPPLPVEAQTGNDGPGTAEGKKKQKSAAVKSALSKTLGLNK.

The Cytoplasmic segment spans residues 1–12; sequence MAIWEQLEVSKA. Residues 13–33 traverse the membrane as a helical segment; the sequence is HVAYACVGVFSSIFSLVSLYV. Residues 34–36 lie on the Extracellular side of the membrane; that stretch reads KEK. The chain crosses the membrane as a helical span at residues 37–57; that stretch reads LYIGESTVAGIFGLIVGPVCL. Over 58 to 70 the chain is Cytoplasmic; it reads NWFNPLKWGNSDS. A helical membrane pass occupies residues 71–91; sequence ITLEITRIVLCLQIFAVAVEL. The Extracellular segment spans residues 92-105; the sequence is PRKYMLKHWVSVTM. Residues 106–126 traverse the membrane as a helical segment; it reads LLLPVMTAGWLIIGLFVWILI. Residues 127-128 are Cytoplasmic-facing; sequence PG. Residues 129-149 traverse the membrane as a helical segment; sequence LNFSASLLISACITATDPILA. At 150–176 the chain is on the extracellular side; it reads QSVVSGKFAQRVPGHLRNLLSAESGCN. Residues 177 to 197 form a helical membrane-spanning segment; sequence DGMAFPFLFLSMNLILHPGNG. Residues 198–203 are Cytoplasmic-facing; the sequence is REIVKD. The helical transmembrane segment at 204 to 224 threads the bilayer; that stretch reads WICVTILYECLFGCLLGCFIG. The Extracellular portion of the chain corresponds to 225-244; it reads YVGRITIRFAEKKNIIDRES. A helical transmembrane segment spans residues 245 to 265; the sequence is FLAFYVVLAFMCAGFGSILGV. Residues 266–294 are Cytoplasmic-facing; that stretch reads DDLLVSFAAGATFAWDGWFSQKTQESNVS. The helical transmembrane segment at 295 to 315 threads the bilayer; the sequence is TVIDLLLNYAYFIYFGAIIPW. The Extracellular portion of the chain corresponds to 316 to 319; that stretch reads SQFN. A helical membrane pass occupies residues 320–340; that stretch reads NGEIGTNVWRLIILSIVVIFL. The Cytoplasmic segment spans residues 341 to 361; that stretch reads RRIPAVMILRPLIPDIKSWRE. A helical transmembrane segment spans residues 362 to 382; sequence ALFVGHFGPIGVGAIFAAILA. Topologically, residues 383 to 410 are extracellular; it reads RGELESTFSDEPTPLNVVPSKEESKHWQ. A helical transmembrane segment spans residues 411-431; the sequence is LIACIWPITCFFIVTSIIVHG. Residues 432-985 are Cytoplasmic-facing; the sequence is SSVAIITLGR…ALSKTLGLNK (554 aa). Disordered regions lie at residues 489-701 and 726-760; these read MTLS…KPGT and DRNEARDDEVSVDSTAHSSLTTTMTNLSSSSGGRL. Residues 517 to 526 are compositionally biased toward polar residues; that stretch reads NNDQIGSVAT. Positions 538-558 are enriched in basic residues; it reads PRRRKLSRKEKRLNRRQKLRN. 2 stretches are compositionally biased toward basic and acidic residues: residues 559 to 572 and 580 to 593; these read KGREIFSSRSKNEM and DLGRERLQKEKEAR. Ser-568 carries the post-translational modification Phosphoserine. The span at 637–646 shows a compositional bias: low complexity; that stretch reads SFESSERSSS. Residues 661–675 show a composition bias toward acidic residues; sequence EETESEIESEDEMEN. The span at 676 to 698 shows a compositional bias: basic and acidic residues; that stretch reads ESERSMASSEERRIRKMKEEEMK. Positions 743 to 756 are enriched in low complexity; the sequence is SSLTTTMTNLSSSS. Phosphothreonine is present on Thr-765. Phosphoserine is present on residues Ser-768 and Ser-774. Residues 812–985 are disordered; sequence INPHKSDDDK…ALSKTLGLNK (174 aa). Composition is skewed to basic and acidic residues over residues 815–828 and 854–863; these read HKSDDDKSKNRPRN and DEEKAIEGPS. The segment covering 887-920 has biased composition (acidic residues); sequence LDLEDEPSSEEDLGDSYNMDDSEDYDDNAYESET. Residues 970-979 show a composition bias toward low complexity; it reads SAAVKSALSK.

The protein belongs to the fungal Na(+)/H(+) exchanger family.

The protein localises to the cell membrane. Functionally, sodium export from cell, takes up external protons in exchange for internal sodium ions. Also capable of exporting potassium ions. This chain is Na(+)/H(+) antiporter (NHA1), found in Saccharomyces cerevisiae (strain ATCC 204508 / S288c) (Baker's yeast).